A 661-amino-acid chain; its full sequence is Fusaric acid cluster transcription factor FUB12 (661 aa).

The segment at residues 17–48 is a DNA-binding region (zn(2)-C6 fungal-type); sequence CVPCRTRKIKCNAAVVGLPCGSCVSRECPDEC. 2 disordered regions span residues 56–132 and 151–184; these read RTVK…PPGQ and SAAQTDASDHQSNDEPDDSFNSQIHHWNPPPQLD. Residues 73 to 98 show a composition bias toward polar residues; it reads PDTNGSVLSPRQQQLPTNVSRQATDS. The span at 99-109 shows a compositional bias: basic and acidic residues; that stretch reads SHSDPVEESIH. Residues 110–119 are compositionally biased toward polar residues; sequence ASHTGSSLRN. Residues 120 to 129 show a composition bias toward basic and acidic residues; it reads DTPHSRDRRP.

The protein localises to the nucleus. In terms of biological role, transcription factor that is involved in the formation of the two Fusaric acid derivatives, dehydrofusaric acid and fusarinolic acid, serving as a detoxification mechanism. The chain is Fusaric acid cluster transcription factor FUB12 from Gibberella moniliformis (strain M3125 / FGSC 7600) (Maize ear and stalk rot fungus).